A 336-amino-acid chain; its full sequence is MEKYNAIKIVKGSGGFGGPLTVKPEEGKDTLLYITGGGAEPEIVEKIVNLTGCKAVNGFKTSVPEEQIFLVIIDCGGTLRCGIYPQKRIPTINVMPVGKSGPLAKFITEDIYVSAVGLNQISLADSSAEPIKSTKVPEEGKREFKYSADKKVSQSLAENSKSSIVQKIGMGAGKVVNTLYQAGRDAVQSMITTILPFMAFVAMLIGIIQGSGFGNWFAKILVPLAGNGIGLMILGFICSIPLLSALLGPGAVIAQIVGTLIGVEIGKGTIPPSLALPALFAINTQCACDFIPVGLGLAEAEPETVEVGVPSVLYSRFMIGVPRVAVAWVASIGLYQ.

Residues 3–195 (KYNAIKIVKG…AVQSMITTIL (193 aa)) form the PTS EIIB type-5 domain. The active-site Phosphocysteine intermediate; for EIIB activity is the cysteine 75. Cysteine 75 is modified (phosphocysteine; by EIIA). Transmembrane regions (helical) follow at residues 194–214 (ILPF…SGFG), 228–248 (GIGL…ALLG), 250–270 (GAVI…KGTI), 278–298 (ALFA…LGLA), and 312–332 (VLYS…VASI).

The protein resides in the cell membrane. It catalyses the reaction D-sorbitol(out) + N(pros)-phospho-L-histidyl-[protein] = D-sorbitol 6-phosphate(in) + L-histidyl-[protein]. In terms of biological role, the phosphoenolpyruvate-dependent sugar phosphotransferase system (sugar PTS), a major carbohydrate active transport system, catalyzes the phosphorylation of incoming sugar substrates concomitantly with their translocation across the cell membrane. The enzyme II complex composed of SrlA, SrlB and SrlE is involved in glucitol/sorbitol transport. This chain is PTS system glucitol/sorbitol-specific EIIB component (srlE), found in Clostridium beijerinckii (strain ATCC 51743 / NCIMB 8052) (Clostridium acetobutylicum).